Reading from the N-terminus, the 1072-residue chain is DNA-directed RNA polymerase subunit beta (1072 aa).

The protein belongs to the RNA polymerase beta chain family. In plastids the minimal PEP RNA polymerase catalytic core is composed of four subunits: alpha, beta, beta', and beta''. When a (nuclear-encoded) sigma factor is associated with the core the holoenzyme is formed, which can initiate transcription.

The protein resides in the plastid. The protein localises to the chloroplast. It carries out the reaction RNA(n) + a ribonucleoside 5'-triphosphate = RNA(n+1) + diphosphate. DNA-dependent RNA polymerase catalyzes the transcription of DNA into RNA using the four ribonucleoside triphosphates as substrates. This chain is DNA-directed RNA polymerase subunit beta, found in Oenothera elata subsp. hookeri (Hooker's evening primrose).